A 129-amino-acid chain; its full sequence is Glycine cleavage system H protein (129 aa).

Positions 24 to 106 (LVRVGISAFA…HGEGWLLVLR (83 aa)) constitute a Lipoyl-binding domain. The residue at position 65 (K65) is an N6-lipoyllysine.

Belongs to the GcvH family. In terms of assembly, the glycine cleavage system is composed of four proteins: P, T, L and H. The cofactor is (R)-lipoate.

In terms of biological role, the glycine cleavage system catalyzes the degradation of glycine. The H protein shuttles the methylamine group of glycine from the P protein to the T protein. The protein is Glycine cleavage system H protein of Parasynechococcus marenigrum (strain WH8102).